Here is a 453-residue protein sequence, read N- to C-terminus: Retroviral integration site protein Fli-1 homolog (453 aa).

In terms of domain architecture, PNT spans 111 to 197; it reads PPPPNMTTNE…SHLNYLRDSS (87 aa). Residues 201 to 214 are compositionally biased toward polar residues; the sequence is GYNTQAHTDQSSRL. Positions 201–273 are disordered; it reads GYNTQAHTDQ…YQILGPTSSR (73 aa). Residues 215–226 are compositionally biased toward basic and acidic residues; it reads TAKEDPSYEAVR. Composition is skewed to polar residues over residues 230–239 and 246–273; these read WGNSMSSPVT and GTQN…TSSR. Positions 282–362 form a DNA-binding region, ETS; sequence IQLWQFLLEL…HGKRYAYKFD (81 aa).

It belongs to the ETS family.

The protein localises to the nucleus. This is Retroviral integration site protein Fli-1 homolog (fli1) from Xenopus laevis (African clawed frog).